The sequence spans 148 residues: Arginine repressor (148 aa).

This sequence belongs to the ArgR family.

It is found in the cytoplasm. It functions in the pathway amino-acid biosynthesis; L-arginine biosynthesis [regulation]. Regulates arginine biosynthesis genes. The polypeptide is Arginine repressor (Pelodictyon phaeoclathratiforme (strain DSM 5477 / BU-1)).